We begin with the raw amino-acid sequence, 98 residues long: NADH-ubiquinone oxidoreductase chain 4L (98 aa).

3 consecutive transmembrane segments (helical) span residues 1-21 (MPYI…GMLI), 29-49 (SLLC…LTIL), and 61-81 (IILL…LVMV).

It belongs to the complex I subunit 4L family. As to quaternary structure, core subunit of respiratory chain NADH dehydrogenase (Complex I) which is composed of 45 different subunits.

Its subcellular location is the mitochondrion inner membrane. It carries out the reaction a ubiquinone + NADH + 5 H(+)(in) = a ubiquinol + NAD(+) + 4 H(+)(out). Core subunit of the mitochondrial membrane respiratory chain NADH dehydrogenase (Complex I) which catalyzes electron transfer from NADH through the respiratory chain, using ubiquinone as an electron acceptor. Part of the enzyme membrane arm which is embedded in the lipid bilayer and involved in proton translocation. This Cephalopachus bancanus (Western tarsier) protein is NADH-ubiquinone oxidoreductase chain 4L (MT-ND4L).